The following is a 255-amino-acid chain: Small ribosomal subunit protein uS2 (255 aa).

Belongs to the universal ribosomal protein uS2 family.

This Streptococcus pyogenes serotype M49 (strain NZ131) protein is Small ribosomal subunit protein uS2.